The sequence spans 317 residues: MAIAIIAEYNPFHNGHIYQLEYTKKNFPNDKIYIILSGNFTQRGEISLADFKTKSKIALKYGADFIIKLPFEYATQAAHIFAKGAIKIVNQHKIDKIIFGSESNDVENLYKLANLWNQNQEAYNAFLKYALKLGYSFPKASAFALEEISGQKIVFPNDILGFEYIKQIVANNYPIRAYTLKRSEEFSLKNPEPNIASATYLRQLVNENKSISRFSPMKFIHPVCSLANLYPEFQKIVRETSPENLAKIWLISEGIENLFKKHINEPNFEKFLNAVNSRRYTNSRIKRAMVYILFRIEDPSQFDEEKIQLDCWKNQGF.

ATP contacts are provided by residues 6–19 (IAEY…HIYQ), Gly-100, Asn-157, and Arg-182.

The protein belongs to the TmcAL family.

The protein resides in the cytoplasm. It carries out the reaction cytidine(34) in elongator tRNA(Met) + acetate + ATP = N(4)-acetylcytidine(34) in elongator tRNA(Met) + AMP + diphosphate. Functionally, catalyzes the formation of N(4)-acetylcytidine (ac(4)C) at the wobble position of elongator tRNA(Met), using acetate and ATP as substrates. First activates an acetate ion to form acetyladenylate (Ac-AMP) and then transfers the acetyl group to tRNA to form ac(4)C34. The protein is tRNA(Met) cytidine acetate ligase of Mesomycoplasma hyopneumoniae (strain J / ATCC 25934 / NCTC 10110) (Mycoplasma hyopneumoniae).